A 97-amino-acid chain; its full sequence is Exodeoxyribonuclease 7 small subunit (97 aa).

The tract at residues 1–22 (MAKTASPGDTAAGNGTEPLPDK) is disordered.

Belongs to the XseB family. Heterooligomer composed of large and small subunits.

Its subcellular location is the cytoplasm. It carries out the reaction Exonucleolytic cleavage in either 5'- to 3'- or 3'- to 5'-direction to yield nucleoside 5'-phosphates.. Its function is as follows. Bidirectionally degrades single-stranded DNA into large acid-insoluble oligonucleotides, which are then degraded further into small acid-soluble oligonucleotides. This Burkholderia vietnamiensis (strain G4 / LMG 22486) (Burkholderia cepacia (strain R1808)) protein is Exodeoxyribonuclease 7 small subunit.